Here is a 484-residue protein sequence, read N- to C-terminus: 3-isopropylmalate dehydratase large subunit (484 aa).

[4Fe-4S] cluster contacts are provided by Cys-352, Cys-412, and Cys-415. Residues 462 to 484 (GTLSSPSDLDPAPESAAVSSSAA) form a disordered region.

Belongs to the aconitase/IPM isomerase family. LeuC type 1 subfamily. As to quaternary structure, heterodimer of LeuC and LeuD. Requires [4Fe-4S] cluster as cofactor.

It carries out the reaction (2R,3S)-3-isopropylmalate = (2S)-2-isopropylmalate. The protein operates within amino-acid biosynthesis; L-leucine biosynthesis; L-leucine from 3-methyl-2-oxobutanoate: step 2/4. Functionally, catalyzes the isomerization between 2-isopropylmalate and 3-isopropylmalate, via the formation of 2-isopropylmaleate. This Arthrobacter sp. (strain FB24) protein is 3-isopropylmalate dehydratase large subunit.